The sequence spans 354 residues: Zinc finger protein-like 1 homolog (354 aa).

The segment at 1–41 (MGICKCKKRSEDFCFNHKKFICDSCVVADHSICYIKSYVSW) adopts a B box-type; degenerate zinc-finger fold. The RING-type; atypical zinc finger occupies 52–103 (CGVCKGKFDVDDNDDSVRLLCYHLYHPECIDVYVAALPQNSSVESYPCPKCP). Disordered stretches follow at residues 139-167 (KQNS…NGTH) and 187-225 (GIHH…PYGL). Residues 196–205 (NNSNNNNIIN) show a composition bias toward low complexity. Residues 287–307 (YLIMITVAIIVFLILISKMGS) traverse the membrane as a helical segment. The disordered stretch occupies residues 326–354 (ININNDNNGGNGAINEETLNDQKIPNNGQ).

It belongs to the ZFPL1 family.

It localises to the membrane. The sequence is that of Zinc finger protein-like 1 homolog (zfpl1) from Dictyostelium discoideum (Social amoeba).